Reading from the N-terminus, the 270-residue chain is tRNA pseudouridine synthase A (270 aa).

The active-site Nucleophile is Asp60. The interval 107-111 (FHARF) is RNA binding. A substrate-binding site is contributed by Tyr118. Positions 168–172 (QCQSR) are interaction with tRNA.

This sequence belongs to the tRNA pseudouridine synthase TruA family. As to quaternary structure, homodimer.

It catalyses the reaction uridine(38/39/40) in tRNA = pseudouridine(38/39/40) in tRNA. Functionally, formation of pseudouridine at positions 38, 39 and 40 in the anticodon stem and loop of transfer RNAs. The protein is tRNA pseudouridine synthase A of Shigella boydii serotype 18 (strain CDC 3083-94 / BS512).